A 499-amino-acid chain; its full sequence is Protein phosphatase PP2A 55 kDa regulatory subunit (499 aa).

The interval 1–30 (MGRWGRQSPVLEPPDPQMQTTPPPPTLPPR) is disordered. Residues 11 to 28 (LEPPDPQMQTTPPPPTLP) are compositionally biased toward pro residues. 7 WD repeats span residues 79–118 (TDAD…KAAN), 144–185 (EIEE…KSFG), 228–266 (AHTY…QSYN), 277–317 (ELTE…LCDR), 336–374 (EIIS…KPIE), 391–432 (ENDC…DVTL), and 467–498 (DFNK…FQDK).

The protein belongs to the phosphatase 2A regulatory subunit B family. As to quaternary structure, PP2A exists in several trimeric forms, all of which consist of a core composed of a catalytic subunit associated with a 65 kDa regulatory subunit (PR65) (subunit A). The core complex associates with a third, variable subunit (subunit B), which confers distinct properties to the holoenzyme.

In terms of biological role, could perform a substrate recognition function or could be responsible for targeting the enzyme complex to the appropriate subcellular compartment. The chain is Protein phosphatase PP2A 55 kDa regulatory subunit (tws) from Drosophila melanogaster (Fruit fly).